The primary structure comprises 77 residues: MIVKVKTLTGKEISVELKESDLVYHIKELLEEKEGIPPSQQRLIFQGKQIDDKLTVTDAHLVEGMQLHLVLTLRGGN.

One can recognise a Ubiquitin-like domain in the interval M1–R74. G76 is covalently cross-linked (Glycyl lysine isopeptide (Gly-Lys) (interchain with K-? in acceptor proteins)). Residue N77 is a propeptide.

Interacts with CDC53 and DCN1.

Its function is as follows. Ubiquitin-like protein modifier that can be covalently attached to lysine residues of target proteins. Activated by the dimeric UBA3-ULA1 E1 enzyme and conjugated by the E2 UBC12 to substrate proteins. RUB1-conjugated (neddylated) substrate proteins include the cullins CDC53, RTT101 and CUL3, and the modification enhances the ubiquitin-ligase activity of the corresponding cullin-RING-based E3 ubiquitin-protein ligase complexes (CRLs). In Saccharomyces cerevisiae (strain ATCC 204508 / S288c) (Baker's yeast), this protein is NEDD8-like protein RUB1 (RUB1).